We begin with the raw amino-acid sequence, 558 residues long: Mitochondrial nucleoid-associated protein 1 (558 aa).

The Extracellular segment spans residues 1–527 (MGAAEPRMEV…VQCNTTIKKS (527 aa)). 3 disordered regions span residues 29–88 (KMRG…SWTA), 130–205 (LQRV…KLGT), and 222–269 (LSDR…KTQK). A compositionally biased stretch (polar residues) spans 36 to 45 (SADQNVSQSK). Over residues 51–81 (QKEKSPTRDLTRAKEKELEVDRPKRAVKAET) the composition is skewed to basic and acidic residues. Composition is skewed to polar residues over residues 131–144 (QRVT…SDAT) and 187–197 (SSTQPHANPAT). The helical transmembrane segment at 528-548 (GVGGLTMLFAGYFILCCNWSF) threads the bilayer. The Cytoplasmic segment spans residues 549–558 (KHLKLQHWRK).

The protein resides in the mitochondrion inner membrane. Its subcellular location is the mitochondrion matrix. It localises to the mitochondrion nucleoid. Functionally, critical regulator of mitochondrial DNA (mtDNA) abundance. Binds dsDNA throughout the mitochondrial genome without sequence specificity and controls mtDNA copy number by promoting its replication. Also plays important roles in mitochondrial metabolism and cell proliferation. The chain is Mitochondrial nucleoid-associated protein 1 from Mus musculus (Mouse).